Consider the following 105-residue polypeptide: Probable tetrachloroethene reductive dehalogenase membrane anchor protein (105 aa).

Helical transmembrane passes span I3–I23, I35–G55, and A66–Y86.

Belongs to the PceB family.

The protein resides in the cell membrane. May act as a membrane anchor for the tetrachloroethene reductive dehalogenase PceA. This Dehalobacter restrictus (strain DSM 9455 / PER-K23) protein is Probable tetrachloroethene reductive dehalogenase membrane anchor protein.